We begin with the raw amino-acid sequence, 110 residues long: Phosphoribosyl-ATP pyrophosphatase (110 aa).

This sequence belongs to the PRA-PH family.

The protein resides in the cytoplasm. It carries out the reaction 1-(5-phospho-beta-D-ribosyl)-ATP + H2O = 1-(5-phospho-beta-D-ribosyl)-5'-AMP + diphosphate + H(+). It participates in amino-acid biosynthesis; L-histidine biosynthesis; L-histidine from 5-phospho-alpha-D-ribose 1-diphosphate: step 2/9. This chain is Phosphoribosyl-ATP pyrophosphatase, found in Pseudomonas savastanoi pv. phaseolicola (strain 1448A / Race 6) (Pseudomonas syringae pv. phaseolicola (strain 1448A / Race 6)).